A 139-amino-acid polypeptide reads, in one-letter code: Holo-[acyl-carrier-protein] synthase (139 aa).

Mg(2+)-binding residues include aspartate 8 and glutamate 57.

It belongs to the P-Pant transferase superfamily. AcpS family. Requires Mg(2+) as cofactor.

Its subcellular location is the cytoplasm. The catalysed reaction is apo-[ACP] + CoA = holo-[ACP] + adenosine 3',5'-bisphosphate + H(+). Functionally, transfers the 4'-phosphopantetheine moiety from coenzyme A to a Ser of acyl-carrier-protein. This Dinoroseobacter shibae (strain DSM 16493 / NCIMB 14021 / DFL 12) protein is Holo-[acyl-carrier-protein] synthase.